The sequence spans 205 residues: UPF0688 protein C1orf174 homolog (205 aa).

Residues methionine 1–asparagine 18 are compositionally biased toward basic residues. 2 disordered regions span residues methionine 1–valine 128 and alanine 184–isoleucine 205. A compositionally biased stretch (basic and acidic residues) spans asparagine 46–methionine 63. A compositionally biased stretch (polar residues) spans isoleucine 71–threonine 108. The segment covering glutamate 187–alanine 196 has biased composition (acidic residues).

It belongs to the UPF0688 family.

Its subcellular location is the nucleus. This is UPF0688 protein C1orf174 homolog from Xenopus laevis (African clawed frog).